Consider the following 105-residue polypeptide: Iron-sulfur cluster assembly protein CyaY (105 aa).

It belongs to the frataxin family.

Functionally, involved in iron-sulfur (Fe-S) cluster assembly. May act as a regulator of Fe-S biogenesis. The chain is Iron-sulfur cluster assembly protein CyaY from Paraburkholderia xenovorans (strain LB400).